Consider the following 67-residue polypeptide: MKASEIREKDIVELNKELGELKSELFKLRFQLATNQLENPMKLKDVKKSIARVKTIIREKELSGNNK.

The protein belongs to the universal ribosomal protein uL29 family.

This chain is Large ribosomal subunit protein uL29, found in Ruminiclostridium cellulolyticum (strain ATCC 35319 / DSM 5812 / JCM 6584 / H10) (Clostridium cellulolyticum).